The primary structure comprises 315 residues: tRNA-dihydrouridine(16) synthase (315 aa).

FMN is bound by residues 7–9 (PME) and glutamine 68. Cysteine 98 acts as the Proton donor in catalysis. Residues lysine 139, 199 to 201 (NGE), and 223 to 224 (GR) contribute to the FMN site.

This sequence belongs to the Dus family. DusC subfamily. FMN serves as cofactor.

It carries out the reaction 5,6-dihydrouridine(16) in tRNA + NADP(+) = uridine(16) in tRNA + NADPH + H(+). The catalysed reaction is 5,6-dihydrouridine(16) in tRNA + NAD(+) = uridine(16) in tRNA + NADH + H(+). Functionally, catalyzes the synthesis of 5,6-dihydrouridine (D), a modified base found in the D-loop of most tRNAs, via the reduction of the C5-C6 double bond in target uridines. Specifically modifies U16 in tRNAs. The chain is tRNA-dihydrouridine(16) synthase from Aquipseudomonas alcaligenes (Pseudomonas alcaligenes).